A 488-amino-acid chain; its full sequence is Monothiol glutaredoxin-S17 (488 aa).

The Thioredoxin domain occupies 2–107 (SGTVKDIVSK…LANKVGKVAG (106 aa)). Glutaredoxin domains are found at residues 154–256 (KSRL…GITT), 284–386 (RARL…GITG), and 391–488 (EDRL…TLSE). Residue lysine 408 participates in glutathione binding. Residue cysteine 416 participates in [2Fe-2S] cluster binding. Residues arginine 445, phenylalanine 457, and 470 to 471 (CD) each bind glutathione.

It belongs to the glutaredoxin family. CGFS subfamily. As to quaternary structure, [2Fe-2S]-bridged holo-homodimer. Interacts in vitro with SUFE1, BOLA1, BOLA2 and BOLA4. Interacts in vivo only with BOLA2. Interacts with RGLG3 and RGLG4. In terms of processing, ubiquitinated at Lys-154. Polyubiquitinated by RGLG3 and RGLG4. Polyubiquitination of GRXS17 leads to its degradation by the proteasome.

It localises to the cytoplasm. In terms of biological role, may only reduce GSH-thiol disulfides, but not protein disulfides. Participates probably to the maturation of iron-sulfur proteins and to the regulation of the redox state of the BOLA proteins. The GRXS17-BOLA2 heterodimer binds a labile, oxygen sensitive iron-sulfur cluster. In Arabidopsis thaliana (Mouse-ear cress), this protein is Monothiol glutaredoxin-S17.